A 306-amino-acid polypeptide reads, in one-letter code: Acetaldehyde dehydrogenase (306 aa).

NAD(+) is bound at residue 12 to 15 (SGNI). C127 (acyl-thioester intermediate) is an active-site residue. NAD(+)-binding positions include 158–166 (SAGPGTRAN) and N277.

Belongs to the acetaldehyde dehydrogenase family.

The enzyme catalyses acetaldehyde + NAD(+) + CoA = acetyl-CoA + NADH + H(+). The chain is Acetaldehyde dehydrogenase from Mycolicibacterium gilvum (strain PYR-GCK) (Mycobacterium gilvum (strain PYR-GCK)).